The chain runs to 215 residues: Large ribosomal subunit protein bL25 (215 aa).

A disordered region spans residues 160 to 215 (GDLPLPEGSELVTEPEETVMSVVAPETEEEPDTEEDEEGEEDVEEESEEEEEESEE). Residues 185–215 (ETEEEPDTEEDEEGEEDVEEESEEEEEESEE) are compositionally biased toward acidic residues.

This sequence belongs to the bacterial ribosomal protein bL25 family. CTC subfamily. In terms of assembly, part of the 50S ribosomal subunit; part of the 5S rRNA/L5/L18/L25 subcomplex. Contacts the 5S rRNA. Binds to the 5S rRNA independently of L5 and L18.

This is one of the proteins that binds to the 5S RNA in the ribosome where it forms part of the central protuberance. This Natranaerobius thermophilus (strain ATCC BAA-1301 / DSM 18059 / JW/NM-WN-LF) protein is Large ribosomal subunit protein bL25.